The following is a 449-amino-acid chain: MGLCASSEKNGSTPDTQTASAGSDNVGKAKVPPKQEPQKTVRTVNTANQQEKQQQRQQQPSPHNVKDRKEQNGSINNAISPTATANTSGSQQINIDSALRDRSSNVAAQPSLSDASSGSNDKELKVLLLGAGESGKSTVLQQLKILHQNGFSEQEIKEYIPLIYQNLLEIGRNLIQARTRFNVNLEPECELTQQDLSRTMSYEMPNNYTGQFPEDIAGVISTLWALPSTQDLVNGPNASKFYLMDSTPYFMENFTRITSPNYRPTQQDILRSRQMTSGIFDTVIDMGSDIKMHIYDVGGQRSERKKWIHCFDNVTLVIFCVSLSEYDQTLMEDKNQNRFQESLVLFDNIVNSRWFARTSVVLFLNKIDLFAEKLSKVPMENYFPDYTGGSDINKAAKYILWRFVQLNRANLSIYPHVTQATDTSNIRLVFAAIKETILENTLKDSGVLQ.

The disordered stretch occupies residues 1–91; that stretch reads MGLCASSEKN…TATANTSGSQ (91 aa). Gly-2 carries the N-myristoyl glycine lipid modification. Cys-4 is lipidated: S-palmitoyl cysteine. 2 stretches are compositionally biased toward polar residues: residues 7 to 23 and 38 to 48; these read SEKNGSTPDTQTASAGS and QKTVRTVNTAN. The span at 49 to 59 shows a compositional bias: low complexity; sequence QQEKQQQRQQQ. Residues 72-91 are compositionally biased toward polar residues; sequence NGSINNAISPTATANTSGSQ. Residues 122–448 form the G-alpha domain; the sequence is KELKVLLLGA…ENTLKDSGVL (327 aa). A G1 motif region spans residues 125–138; sequence KVLLLGAGESGKST. GTP-binding residues include Glu-133, Ser-134, Gly-135, Lys-136, Ser-137, Thr-138, Asp-245, Leu-270, Thr-276, Gly-299, Asn-365, Lys-366, Asp-368, and Ala-420. Residue Ser-137 coordinates Mg(2+). The segment at 268-276 is G2 motif; it reads DILRSRQMT. Thr-276 contributes to the Mg(2+) binding site. Residues 292 to 301 form a G3 motif region; that stretch reads MHIYDVGGQR. Residues 361 to 368 are G4 motif; it reads VLFLNKID. The G5 motif stretch occupies residues 418 to 423; that stretch reads TQATDT.

This sequence belongs to the G-alpha family. G(q) subfamily. As to quaternary structure, g proteins are composed of 3 units; alpha, beta and gamma. The alpha chain contains the guanine nucleotide binding site. GPA2 interacts with the kelch repeat beta-mimic proteins GPB1 and GPB2 and with the gamma subunit GPG1. Interacts with the G protein coupled receptor GPR1. Also interacts with regulators of G protein signaling (RGS) protein RGS2. Mg(2+) serves as cofactor. Post-translationally, myristoylation at Gly-2 and palmitoylation at Cys-4 are required for membrane localization and function of the protein.

Its subcellular location is the cell membrane. Alternates between an inactive form bound to GDP and an active form bound to GTP. Activated by the G protein coupled receptor (GPCR) GPR1, which serves as a guanine nucleotide-exchange factor (GEF), and inactivated by RGS2, acting as a GTPase-activating protein (GAP) for GPA2. Alpha subunit of the heterotrimeric guanine nucleotide-binding protein (G protein) involved in glucose-induced cAMP signaling. Binds to its cognate transmembrane receptor GPR1, which senses extracellular carbon sources, and activates cAMP-PKA signaling and governs diploid pseudohyphal differentiation and haploid invasive growth. The G protein beta-mimic proteins GPB1 and GPB2 inhibit GPA2-GPR1 coupling, probably to reduce signaling in the absence of glucose. The protein is Guanine nucleotide-binding protein alpha-2 subunit (GPA2) of Saccharomyces cerevisiae (strain ATCC 204508 / S288c) (Baker's yeast).